We begin with the raw amino-acid sequence, 177 residues long: Acireductone dioxygenase (177 aa).

The tract at residues 1–23 (MVRAWYMDDSDADQRAPHMTDPP) is disordered. Fe(2+) contacts are provided by His86, His88, Glu92, and His131. The Ni(2+) site is built by His86, His88, Glu92, and His131.

Belongs to the acireductone dioxygenase (ARD) family. It depends on Fe(2+) as a cofactor. Ni(2+) serves as cofactor.

Its subcellular location is the cytoplasm. The protein localises to the nucleus. It catalyses the reaction 1,2-dihydroxy-5-(methylsulfanyl)pent-1-en-3-one + O2 = 4-methylsulfanyl-2-oxobutanoate + formate + 2 H(+). The catalysed reaction is 1,2-dihydroxy-5-(methylsulfanyl)pent-1-en-3-one + O2 = 3-(methylsulfanyl)propanoate + CO + formate + 2 H(+). The protein operates within amino-acid biosynthesis; L-methionine biosynthesis via salvage pathway; L-methionine from S-methyl-5-thio-alpha-D-ribose 1-phosphate: step 5/6. Its function is as follows. Catalyzes 2 different reactions between oxygen and the acireductone 1,2-dihydroxy-3-keto-5-methylthiopentene (DHK-MTPene) depending upon the metal bound in the active site. Fe-containing acireductone dioxygenase (Fe-ARD) produces formate and 2-keto-4-methylthiobutyrate (KMTB), the alpha-ketoacid precursor of methionine in the methionine recycle pathway. Ni-containing acireductone dioxygenase (Ni-ARD) produces methylthiopropionate, carbon monoxide and formate, and does not lie on the methionine recycle pathway. This Branchiostoma floridae (Florida lancelet) protein is Acireductone dioxygenase.